Here is a 327-residue protein sequence, read N- to C-terminus: uncharacterized protein (327 aa).

The 68-residue stretch at 12–79 (KRLDEFLAKE…LKKELDLEIE (68 aa)) folds into the S4 RNA-binding domain. The active site involves Asp-136.

The protein belongs to the pseudouridine synthase RluA family.

It catalyses the reaction a uridine in RNA = a pseudouridine in RNA. This is an uncharacterized protein from Helicobacter pylori (strain ATCC 700392 / 26695) (Campylobacter pylori).